A 911-amino-acid chain; its full sequence is Protein translocase subunit SecA (911 aa).

ATP contacts are provided by residues Q86, 104 to 108 (GEGKT), and D494. Residues 856-911 (VEGIDAPQRPAQLRFTGPSEDGQSAVTRSGTDSGATVAAGTNRRSRRQAERRGRRG) form a disordered region. The span at 876–889 (DGQSAVTRSGTDSG) shows a compositional bias: polar residues. The segment covering 902 to 911 (RQAERRGRRG) has biased composition (basic and acidic residues).

It belongs to the SecA family. As to quaternary structure, monomer and homodimer. Part of the essential Sec protein translocation apparatus which comprises SecA, SecYEG and auxiliary proteins SecDF. Other proteins may also be involved.

It is found in the cell membrane. The protein resides in the cytoplasm. The enzyme catalyses ATP + H2O + cellular proteinSide 1 = ADP + phosphate + cellular proteinSide 2.. Functionally, part of the Sec protein translocase complex. Interacts with the SecYEG preprotein conducting channel. Has a central role in coupling the hydrolysis of ATP to the transfer of proteins into and across the cell membrane, serving as an ATP-driven molecular motor driving the stepwise translocation of polypeptide chains across the membrane. In Micrococcus luteus (strain ATCC 4698 / DSM 20030 / JCM 1464 / CCM 169 / CCUG 5858 / IAM 1056 / NBRC 3333 / NCIMB 9278 / NCTC 2665 / VKM Ac-2230) (Micrococcus lysodeikticus), this protein is Protein translocase subunit SecA.